We begin with the raw amino-acid sequence, 438 residues long: Xylose isomerase (438 aa).

Residues His-102 and Asp-105 contribute to the active site. Residues Glu-233, Glu-269, His-272, Asp-297, Asp-308, Asp-310, and Asp-340 each contribute to the Mg(2+) site.

It belongs to the xylose isomerase family. Homotetramer. Mg(2+) is required as a cofactor.

The protein localises to the cytoplasm. It carries out the reaction alpha-D-xylose = alpha-D-xylulofuranose. The protein is Xylose isomerase of Solibacter usitatus (strain Ellin6076).